The primary structure comprises 28 residues: Ranatuerin-2AVa (28 aa).

A disulfide bridge links C23 with C28.

Expressed by the skin glands.

The protein resides in the secreted. Functionally, has antibacterial activity against the Gram positive bacterium L.lactis. The chain is Ranatuerin-2AVa from Rana arvalis (Moor frog).